The chain runs to 389 residues: Phospho-N-acetylmuramoyl-pentapeptide-transferase (389 aa).

10 helical membrane passes run 25 to 45 (RAVM…PAVI), 73 to 93 (TMGG…WADL), 97 to 117 (FIWI…VDDY), 135 to 155 (FWQS…VSEA), 190 to 210 (ISYP…IVGA), 222 to 242 (GLVI…AYVM), 259 to 279 (AGEL…FLWF), 287 to 307 (FMGD…AVIV), 311 to 331 (IVLF…MLQV), and 366 to 386 (QVVV…LSTL).

This sequence belongs to the glycosyltransferase 4 family. MraY subfamily. It depends on Mg(2+) as a cofactor.

The protein resides in the cell inner membrane. It catalyses the reaction UDP-N-acetyl-alpha-D-muramoyl-L-alanyl-gamma-D-glutamyl-meso-2,6-diaminopimeloyl-D-alanyl-D-alanine + di-trans,octa-cis-undecaprenyl phosphate = di-trans,octa-cis-undecaprenyl diphospho-N-acetyl-alpha-D-muramoyl-L-alanyl-D-glutamyl-meso-2,6-diaminopimeloyl-D-alanyl-D-alanine + UMP. It functions in the pathway cell wall biogenesis; peptidoglycan biosynthesis. Functionally, catalyzes the initial step of the lipid cycle reactions in the biosynthesis of the cell wall peptidoglycan: transfers peptidoglycan precursor phospho-MurNAc-pentapeptide from UDP-MurNAc-pentapeptide onto the lipid carrier undecaprenyl phosphate, yielding undecaprenyl-pyrophosphoryl-MurNAc-pentapeptide, known as lipid I. In Paraburkholderia xenovorans (strain LB400), this protein is Phospho-N-acetylmuramoyl-pentapeptide-transferase.